Here is a 122-residue protein sequence, read N- to C-terminus: Glucagon-2 (122 aa).

An N-terminal signal peptide occupies residues Met1–Gln21. 2 propeptides span residues Asn83–Phe86 and Glu122.

This sequence belongs to the glucagon family.

Its subcellular location is the secreted. Promotes hydrolysis of glycogen and lipids, and raises the blood sugar level. This Lophius americanus (American angler) protein is Glucagon-2 (gcg2).